A 331-amino-acid chain; its full sequence is Ornithine lipid hydroxylase OlsE (331 aa).

A run of 5 helical transmembrane segments spans residues 13–33 (VSSL…YFAF), 37–57 (MHLL…ALFE), 85–105 (GGVQ…ATVA), 120–140 (WPMA…LYMA), and 189–209 (LLGA…FIGL). The region spanning 126-260 (VVLGLVIAEF…LVIWDQLLGT (135 aa)) is the Fatty acid hydroxylase domain.

This sequence belongs to the sterol desaturase family.

It is found in the cell inner membrane. It participates in lipid metabolism. Functionally, involved in the biosynthesis of ornithine lipids (OLs), which are phosphorus-free membrane lipids. Is responsible for the hydroxylation of OL within the ornithine moiety. The protein is Ornithine lipid hydroxylase OlsE of Rhizobium tropici.